The sequence spans 592 residues: Cyclin-dependent kinase-like 3 (592 aa).

The 283-residue stretch at 4 to 286 folds into the Protein kinase domain; it reads YETLGKVGEG…SSDLLHHEYF (283 aa). ATP is bound by residues 10 to 18 and Lys33; that span reads VGEGSYGTV. Residues 44–50 carry the [NKR]KIAxRE motif; that stretch reads NKIAMRE. The active-site Proton acceptor is Asp125. Phosphothreonine is present on Thr158. Phosphotyrosine is present on Tyr160. Residues 368–379 show a composition bias toward basic and acidic residues; it reads GDISEPKKKEYE. Disordered regions lie at residues 368–390 and 459–485; these read GDIS…ANEN and RAKK…PGPI. Polar residues predominate over residues 466–477; the sequence is SSQSIGQVMPNS.

Belongs to the protein kinase superfamily. CMGC Ser/Thr protein kinase family. CDC2/CDKX subfamily.

The protein localises to the cytoplasm. It catalyses the reaction L-seryl-[protein] + ATP = O-phospho-L-seryl-[protein] + ADP + H(+). It carries out the reaction L-threonyl-[protein] + ATP = O-phospho-L-threonyl-[protein] + ADP + H(+). The polypeptide is Cyclin-dependent kinase-like 3 (Homo sapiens (Human)).